Consider the following 505-residue polypeptide: Deoxyguanosinetriphosphate triphosphohydrolase (505 aa).

Positions 66 to 273 (RLTHSMEVQQ…MEAADDISYC (208 aa)) constitute an HD domain.

It belongs to the dGTPase family. Type 1 subfamily. In terms of assembly, homotetramer. Requires Mg(2+) as cofactor.

The catalysed reaction is dGTP + H2O = 2'-deoxyguanosine + triphosphate + H(+). DGTPase preferentially hydrolyzes dGTP over the other canonical NTPs. This is Deoxyguanosinetriphosphate triphosphohydrolase from Escherichia coli O81 (strain ED1a).